Here is a 637-residue protein sequence, read N- to C-terminus: tRNA uridine 5-carboxymethylaminomethyl modification enzyme MnmG (637 aa).

18–23 (GAGHAG) serves as a coordination point for FAD. 282–296 (GPRYCPSIEDKIVRF) serves as a coordination point for NAD(+).

This sequence belongs to the MnmG family. Homodimer. Heterotetramer of two MnmE and two MnmG subunits. FAD is required as a cofactor.

Its subcellular location is the cytoplasm. Its function is as follows. NAD-binding protein involved in the addition of a carboxymethylaminomethyl (cmnm) group at the wobble position (U34) of certain tRNAs, forming tRNA-cmnm(5)s(2)U34. The polypeptide is tRNA uridine 5-carboxymethylaminomethyl modification enzyme MnmG (Pediococcus pentosaceus (strain ATCC 25745 / CCUG 21536 / LMG 10740 / 183-1w)).